We begin with the raw amino-acid sequence, 109 residues long: Meiotically up-regulated gene 153 protein (109 aa).

Its subcellular location is the mitochondrion. In terms of biological role, has a role in meiosis. This is Meiotically up-regulated gene 153 protein (mug153) from Schizosaccharomyces pombe (strain 972 / ATCC 24843) (Fission yeast).